The primary structure comprises 299 residues: tRNA dimethylallyltransferase (299 aa).

13–20 (GPTASGKT) contacts ATP. 15-20 (TASGKT) contributes to the substrate binding site. An interaction with substrate tRNA region spans residues 38 to 41 (DSRQ).

It belongs to the IPP transferase family. As to quaternary structure, monomer. Requires Mg(2+) as cofactor.

The catalysed reaction is adenosine(37) in tRNA + dimethylallyl diphosphate = N(6)-dimethylallyladenosine(37) in tRNA + diphosphate. Functionally, catalyzes the transfer of a dimethylallyl group onto the adenine at position 37 in tRNAs that read codons beginning with uridine, leading to the formation of N6-(dimethylallyl)adenosine (i(6)A). The polypeptide is tRNA dimethylallyltransferase (Prochlorococcus marinus (strain MIT 9211)).